Here is a 612-residue protein sequence, read N- to C-terminus: Cryptochrome-2 (612 aa).

Residues 1 to 485 are CNT2, binds chromophores to sense blue light and mediate CRY dimerization; the sequence is MKMDKKTIVW…TARELLAKAI (485 aa). Positions 5–134 constitute a Photolyase/cryptochrome alpha/beta domain; sequence KKTIVWFRRD…SVQSYNGDLL (130 aa). Residue Tyr-232 coordinates FAD. The Mg(2+) site is built by Asn-235 and Ser-243. 244 to 248 lines the FAD pocket; that stretch reads TSLLS. Residue His-355 participates in Mg(2+) binding. Residues Asn-356 and 387 to 389 contribute to the FAD site; that span reads DAD. 356-357 is an ATP binding site; that stretch reads NR. Asp-406 is a binding site for ATP. The interval 486–612 is CCT2/CCE2, mediates blue light signaling; the sequence is SRTREAQIMI…TTSLGKNGCK (127 aa). A disordered region spans residues 539–576; sequence GSKRVKPEEEEERDMKKSRGFDERELFSTAESSSSSSV. The short motif at 541 to 555 is the Nuclear localization signal element; that stretch reads KRVKPEEEEERDMKK. Basic and acidic residues predominate over residues 551 to 564; that stretch reads RDMKKSRGFDEREL. Ser-587 carries the phosphoserine; by CK1 modification. Residues 590–612 form a disordered region; it reads KNLEGIQDSSDQITTSLGKNGCK. Polar residues predominate over residues 596–612; the sequence is QDSSDQITTSLGKNGCK. Phosphoserine occurs at positions 598 and 599. Thr-603 carries the phosphothreonine; by CK1 modification. Ser-605 carries the phosphoserine modification.

The protein belongs to the DNA photolyase class-1 family. As to quaternary structure, homodimer. Blue-light dependent dimerization. Interacts with COP1 and PHYB in the nucleus. Binds reversibly to CIBs proteins such as BHLH63/CIB1, BHLH78/CIB2, BHLH74/CIB4 and BHLH76/CIB5 after blue light illumination to stimulate their transcription factor activities. Interacts with PIF4 and PIF5 in the nucleus in response to low blue light (LBL). Binds to SPA1 in response to blue light, this interaction prevents SPA1/COP1 complex formation but stimulates interaction with COP1, and thus avoid COP1-dependent degradation of the transcription factors CO and HY5 by the proteasome and promotes hypocotyl elongation and floral initiation. Binding to ATP mediates conformational changes which facilitate flavin binding. Interacts with BIC1 in both darkness and light. Interacts with NRP. It depends on FAD as a cofactor. (6R)-5,10-methylene-5,6,7,8-tetrahydrofolate is required as a cofactor. Post-translationally, phosphorylated by CK1.3 and CK1.4; in response to blue light. Required for degradation. Adopts an open conformation when phosphorylated upon photoexcitation and thus interacts with signaling partner proteins. Not autophosphorylated, even in complex with FAD cofactor. In terms of processing, ubiquitinated; in response to blue light. Mostly expressed in the shoot meristems and root tips, and, to a lower extent, in the cotyledons, hypocotyls, and roots.

It localises to the nucleus. The protein resides in the PML body. Its subcellular location is the cytoplasm. Its function is as follows. Photoreceptor that mediates primarily blue light inhibition of hypocotyl elongation and photoperiodic control of floral initiation, and regulates other light responses, including circadian rhythms, tropic growth, stomata opening, guard cell development, root development, bacterial and viral pathogen responses, abiotic stress responses, cell cycles, programmed cell death, apical dominance, fruit and ovule development, seed dormancy, and magnetoreception. Photoexcited cryptochromes interact with signaling partner proteins to alter gene expression at both transcriptional and post-translational levels and, consequently, regulate the corresponding metabolic and developmental programs. Blue-light absorbing flavoprotein that activates reversible flavin photoreduction via an electron transport chain comprising a tryptophan triad (W-321, W-374 and W-397), or via an alternative electron transport that involves small metabolites, including NADPH, NADH, and ATP. The half-life of the activated signaling state is about 16 minutes. Perceives low blue light (LBL) and responds by directly contacting two bHLH transcription factors, PIF4 and PIF5, at chromatin on E-box variant 5'-CA[CT]GTG-3' to promote their activity and stimulate specific gene expression to adapt global physiology (e.g. hypocotyl elongation and hyponastic growth in low blue light). In response to blue light, binds to CIB proteins (e.g. BHLH63/CIB1 and BHLH76/CIB5) to activate transcription and floral initiation. Mediates blue light-induced gene expression, floral initiation and hypocotyl elongation through the interaction with SPA1 that prevents formation of SPA1/COP1 complex but stimulates COP1 binding, and thus inhibits COP1-mediated degradation of transcription factors (e.g. CO and HY5). Promotes flowering time in continuous light (LL). Involved in shortening the circadian clock period, especially at 27 degrees Celsius, in blue light (BL). Required to maintain clock genes expression rhythm. Triggers nuclear accumulation of ROS in response to blue light illumination. Involved in blue light-dependent stomatal opening, transpiration and inhibition of stem and root growth, probably by regulating abscisic acid (ABA). Regulates the timing of flowering by promoting the expression of 'FLOWERING LOCUS T' (FT) in vascular bundles. Negatively regulated by 'FLOWERING LOCUS C' (FLC). General positive regulator of reversible low light-induced chromatin decompaction. Involved in triggering chromatin decondensation during floral transition. Together with phototropins, involved in phototropism regulation by various blue light fluence; blue light attenuates phototropism in high fluence rates (100 umol.m-2.s-1) but enhances phototropism in low fluence rates (&lt;1.0 umol.m-2.s-1). The effect of near-null magnetic field on flowering is altered by changes of blue light cycle and intensity in a CRY1/CRY2-dependent manner. Involved in the strigolactone signaling that regulates hypocotyl growth in response to blue light. Functionally, confers resistance to turnip crinkle virus (TCV) by preventing COP1-mediated proteasome-mediated degradation of RPP8/HRT, thus promoting its stability in light. Exposure to darkness or blue-light induces degradation of CRY2, and in turn of RPP8/HRT, resulting in susceptibility to TCV. This chain is Cryptochrome-2, found in Arabidopsis thaliana (Mouse-ear cress).